Consider the following 1404-residue polypeptide: DNA (cytosine-5)-methyltransferase 3 (1404 aa).

Positions 1 to 10 (MKTKAGKQKK) are enriched in basic residues. A disordered region spans residues 1 to 35 (MKTKAGKQKKRSVDSDDDVSRERRPKRATSGTNFK). The span at 11-22 (RSVDSDDDVSRE) shows a compositional bias: basic and acidic residues. A Glycyl lysine isopeptide (Lys-Gly) (interchain with G-Cter in ubiquitin) cross-link involves residue Lys-486. 2 consecutive BAH domains span residues 614 to 748 (RKMD…FSLP) and 788 to 929 (IKYS…KKLP). In terms of domain architecture, SAM-dependent MTase C5-type spans 969 to 1402 (LATLDIFAGC…RKLKEALHLR (434 aa)). Cys-1085 is a catalytic residue.

The protein belongs to the class I-like SAM-binding methyltransferase superfamily. C5-methyltransferase family.

The protein resides in the nucleus. The enzyme catalyses a 2'-deoxycytidine in DNA + S-adenosyl-L-methionine = a 5-methyl-2'-deoxycytidine in DNA + S-adenosyl-L-homocysteine + H(+). Its function is as follows. Maintains chromatin CpG methylation that plays a role in genomic imprinting, regulation of embryogenesis and seed viability. Required for proper patterns of CG DNA methylation in dividing cells. Required during the endosperm development in seeds. This Arabidopsis thaliana (Mouse-ear cress) protein is DNA (cytosine-5)-methyltransferase 3 (MET3).